The chain runs to 499 residues: Endoglucanase (499 aa).

An N-terminal signal peptide occupies residues 1–29 (MKRSISIFITCLLITLLTMGGMLASPASA). Substrate is bound by residues H65, 69-70 (WY), Y96, and H131. Residue E169 is the Proton donor of the active site. A substrate-binding site is contributed by Y231. E257 acts as the Nucleophile in catalysis. Residues 263 to 264 (AS), W291, and 296 to 298 (KQE) contribute to the substrate site. One can recognise a CBM3 domain in the interval 350 to 499 (QENGISVQYR…GKLIWGTEPN (150 aa)).

Belongs to the glycosyl hydrolase 5 (cellulase A) family.

It carries out the reaction Endohydrolysis of (1-&gt;4)-beta-D-glucosidic linkages in cellulose, lichenin and cereal beta-D-glucans.. The polypeptide is Endoglucanase (bglC) (Bacillus subtilis).